The primary structure comprises 392 residues: MNLRPLAPLLLTLLAGCSQQPPLRGSGDLGVLIERADGSVQILDGTAKTSLARVEGLGDLSHASLVFSRDQRYAYVFGRDGGLTKLDLLAQRIDKRLIQGGNSIGGAISQDGRLVAVSNYEPGGVKVFDSRTLELVAEIPATRLPGQDRNSRVVGLVDAPGQRFVFSLFDSGEIWIADFSQGDTPHLTRFRDIGKQPYDALISPDGRYYMAGLFGEDGMAQLDLWHPERGVRRVLGDYGRGQRKLPVYKMPHLEGWTIASDQAFVPAVGHHQVLVLDARDWKQTDAIDVAGQPVFVMTRPDDRQIWVNFAYPDNDKVQVIDSETHEVIETLRPGPGVLHMEFSGRGDQVWISVRDADQLQVWDPYRLKRIGSLPARSPSGIFFSHRAQHIGL.

It localises to the cytoplasm. Functionally, required for the biosynthesis of heme d1 of nitrite reductase. Could have a dehydrogenase activity yielding sirohydrochlorin from precorrin-2 or dehydrogenation of propionate side chain C17. In Pseudomonas aeruginosa (strain ATCC 15692 / DSM 22644 / CIP 104116 / JCM 14847 / LMG 12228 / 1C / PRS 101 / PAO1), this protein is Protein NirF (nirF).